A 438-amino-acid chain; its full sequence is GTPase Obg (438 aa).

The region spanning 2-160 (SMFLDQVTID…RKIELELKVL (159 aa)) is the Obg domain. Residues 128–147 (NIRFASPRNPAPEIAENGEP) are disordered. An OBG-type G domain is found at 161–339 (ADVGLVGFPS…LLNATADLLE (179 aa)). Residues 167-174 (GFPSVGKS), 192-196 (FTTLV), 214-217 (DLPG), 284-287 (NKMD), and 320-322 (SGV) contribute to the GTP site. Residues serine 174 and threonine 194 each coordinate Mg(2+). One can recognise an OCT domain in the interval 360-438 (GFQPEGPEFT…IGNFEFEFVE (79 aa)).

Belongs to the TRAFAC class OBG-HflX-like GTPase superfamily. OBG GTPase family. As to quaternary structure, monomer. It depends on Mg(2+) as a cofactor.

It localises to the cytoplasm. An essential GTPase which binds GTP, GDP and possibly (p)ppGpp with moderate affinity, with high nucleotide exchange rates and a fairly low GTP hydrolysis rate. Plays a role in control of the cell cycle, stress response, ribosome biogenesis and in those bacteria that undergo differentiation, in morphogenesis control. In Enterococcus faecalis (strain ATCC 700802 / V583), this protein is GTPase Obg.